The chain runs to 61 residues: Large ribosomal subunit protein uL30 (61 aa).

This sequence belongs to the universal ribosomal protein uL30 family. As to quaternary structure, part of the 50S ribosomal subunit.

The protein is Large ribosomal subunit protein uL30 of Dichelobacter nodosus (strain VCS1703A).